Consider the following 479-residue polypeptide: Integrin-linked protein kinase 1 (479 aa).

Phosphoserine is present on residues Ser-17 and Ser-26. The tract at residues 29 to 73 (FTRQSSLDPRRTNMRFSFGRQSSLDPIRRSPDSSKSDDEPHMSVP) is disordered. The span at 54–69 (PIRRSPDSSKSDDEPH) shows a compositional bias: basic and acidic residues. ANK repeat units follow at residues 77-106 (DSTM…DVNS) and 110-139 (DGRT…NIDA). The 268-residue stretch at 194 to 461 (LEVQVRKSDG…EIIIRLDKIV (268 aa)) folds into the Protein kinase domain. Residues 200–208 (KSDGISKGA) and Lys-222 each bind ATP. Asp-319 functions as the Proton acceptor in the catalytic mechanism.

It belongs to the protein kinase superfamily. Ser/Thr protein kinase family. Interacts with CML9 and POT5/HAK5. Autophosphorylated at Ser-17 and Ser-26.

It localises to the cell membrane. It is found in the endoplasmic reticulum membrane. The enzyme catalyses L-seryl-[protein] + ATP = O-phospho-L-seryl-[protein] + ADP + H(+). The catalysed reaction is L-threonyl-[protein] + ATP = O-phospho-L-threonyl-[protein] + ADP + H(+). Its activity is regulated as follows. Kinase activity is suppressed by interaction with CML9. In terms of biological role, functions as a link between plant defense pathways, stress responses and potassium homeostasis. Promotes osmotic stress sensitivity, responses to the bacterial-derived pathogen-associated molecular pattern (PAMP) flg22, and resistance to bacterial pathogens. Promotes the accumulation of POT5/HAK5, a potassium transporter that mediates high-affinity uptake during potassium deficiency. This chain is Integrin-linked protein kinase 1, found in Arabidopsis thaliana (Mouse-ear cress).